Here is a 393-residue protein sequence, read N- to C-terminus: Bone morphogenetic protein 2 (393 aa).

Positions methionine 1–glycine 19 are cleaved as a signal peptide. A propeptide spans glycine 20–arginine 279 (cleaved by PCSK5). Serine 85 is modified (phosphoserine). Asparagine 133, asparagine 161, and asparagine 197 each carry an N-linked (GlcNAc...) asparagine glycan. A disordered region spans residues glycine 268–lysine 290. Residues histidine 271 to lysine 290 are compositionally biased toward basic residues. Disulfide bonds link cysteine 293–cysteine 358, cysteine 322–cysteine 390, and cysteine 326–cysteine 392. Residue asparagine 335 is glycosylated (N-linked (GlcNAc...) asparagine).

The protein belongs to the TGF-beta family. As to quaternary structure, homodimer; disulfide-linked. Interacts with SOSTDC1. Interacts with GREM2, RGMA, RGMB and RGMC. Interacts with ASPN. Interacts with MAFP5. Interacts with FBN1 (via N-terminal domain) and FBN2. Interacts with type I receptor BMPR1A. Interacts with type II receptor BMPR2. Interacts with SCUBE3. Interacts with TNFAIP6 (primarily via Link domain); this interaction is inhibited by hyaluronan. Interacts with ERFE. Interacts with BMPR1A/ALK3; the interaction may induce HAMP expression. Forms heterodimers with BMP6 in vitro; the heterodimer then binds to its receptor BMPR1A /ALK3 and may induce HAMP expression. Interacts with TGFBR3. As to expression, expressed in femur, calvaria, trachea, lung and ovary.

It is found in the secreted. Growth factor of the TGF-beta superfamily that plays essential roles in many developmental processes, including cardiogenesis, neurogenesis, and osteogenesis. Induces cartilage and bone formation. Initiates the canonical BMP signaling cascade by associating with type I receptor BMPR1A and type II receptor BMPR2. Once all three components are bound together in a complex at the cell surface, BMPR2 phosphorylates and activates BMPR1A. In turn, BMPR1A propagates signal by phosphorylating SMAD1/5/8 that travel to the nucleus and act as activators and repressors of transcription of target genes. Also acts to promote expression of HAMP, via the interaction with its receptor BMPR1A/ALK3. Can also signal through non-canonical pathways such as ERK/MAP kinase signaling cascade that regulates osteoblast differentiation. Also stimulates the differentiation of myoblasts into osteoblasts via the EIF2AK3-EIF2A-ATF4 pathway by stimulating EIF2A phosphorylation which leads to increased expression of ATF4 which plays a central role in osteoblast differentiation. Acts as a positive regulator of odontoblast differentiation during mesenchymal tooth germ formation, expression is repressed during the bell stage by MSX1-mediated inhibition of CTNNB1 signaling. The chain is Bone morphogenetic protein 2 (Bmp2) from Rattus norvegicus (Rat).